Here is a 327-residue protein sequence, read N- to C-terminus: NF-kappa-B inhibitor delta (327 aa).

The disordered stretch occupies residues 1-40 (MEDSLDTRLYPEPSLSQVGSWRVSSLPSGSPQLPSPTGPS). A compositionally biased stretch (polar residues) spans 14 to 23 (SLSQVGSWRV). 6 ANK repeats span residues 62-97 (EGDT…IREH), 98-127 (KGKT…EPNA), 131-160 (QGRS…QVDL), 166-215 (EGLT…SHTS), 220-250 (SNKT…DLRA), and 257-290 (HGNT…DPTL). Positions 293-327 (LENEQPVHLLRPGPGPEGLRQLLKRSRTAPPGLSS) are disordered.

Belongs to the NF-kappa-B inhibitor family. Interacts with NFKB1, RELA and RELB; in the nucleus. Specifically expressed in spleen and at low levels in thymus. Expressed in a population of antigen-presenting dendritic cells which may act as regulators of systemic inflammatory response.

The protein localises to the nucleus. Its function is as follows. Regulates the expression of IL-2, IL-6, and other cytokines through regulation on NF-kappa-B activity. Functions in the regulation of inflammatory responses. Involved in the induction of T helper 17 cells (Th17) differentiation upon recognition of antigen by T cell antigen receptor (TCR). According to PubMed:11931770, it may also regulate TCR-induced negative selection of thymocytes. This Mus musculus (Mouse) protein is NF-kappa-B inhibitor delta (Nfkbid).